A 306-amino-acid polypeptide reads, in one-letter code: Pantothenate kinase (306 aa).

91–98 serves as a coordination point for ATP; it reads GSVAVGKS.

Belongs to the prokaryotic pantothenate kinase family.

It localises to the cytoplasm. It catalyses the reaction (R)-pantothenate + ATP = (R)-4'-phosphopantothenate + ADP + H(+). The protein operates within cofactor biosynthesis; coenzyme A biosynthesis; CoA from (R)-pantothenate: step 1/5. The chain is Pantothenate kinase from Streptococcus equi subsp. zooepidemicus (strain MGCS10565).